The following is a 1009-amino-acid chain: Kinesin-like protein KIN-5C (1009 aa).

Positions 12-359 (NVQVLLRCRP…LDYAHRAKNI (348 aa)) constitute a Kinesin motor domain. 98-105 (GQTGTGKT) is an ATP binding site. Residues 406–526 (YQEESERKVM…NSSLHQKIGR (121 aa)) adopt a coiled-coil conformation. Disordered regions lie at residues 862–882 (SNEQ…KDVT) and 987–1009 (YESF…SQVN). Composition is skewed to basic and acidic residues over residues 863-882 (NEQH…KDVT) and 987-996 (YESFATKETK). The segment covering 997–1009 (PQQLTRSPLSQVN) has biased composition (polar residues).

Belongs to the TRAFAC class myosin-kinesin ATPase superfamily. Kinesin family. KIN-5/BimC subfamily.

The protein resides in the cytoplasm. The protein localises to the cytoskeleton. It localises to the spindle. Responsible for microtubule translocation. May be important for the organization of phragmoplast-specific arrays of microtubules. Plays an essential role in stabilizing the mitotic spindle. Required during mitotic cytokinesis. The protein is Kinesin-like protein KIN-5C of Arabidopsis thaliana (Mouse-ear cress).